Reading from the N-terminus, the 395-residue chain is MAKEIFRRDKPHLNIGTIGHVDHGKTTLTASITKVLAKKGLAVAKEFSSIDNAPEEKERGITINTSHVEYQTEIRHYAHVDCPGHADYVKNMVTGAAQMDGAILVVAATDGPMPQTREHILLARQVGVPNLVVFMNKVDQVDDKEILELVEIEIRELLSKYEYDGENIPIIQGSALGALNGEKKWEKQIETLMKTVDNYIKEPIRNIDKPFLMPIEDVFTITGRGTVATGRIETGTINTGDSIDIIGMGIDKLNSIVTGVEMFRKILDKGQAGDNVGLLLRGIEKKDIRRGMVISKPGYITPHKKFNAQIYILKKEEGGRHTPFHNKYKPQFYLRTTDVTGTIYLLNNLEMVMPGDNISVEVELLQPVAISEGLRFAIREGGRTVGAGQVIKIIE.

A tr-type G domain is found at 10–204 (KPHLNIGTIG…TVDNYIKEPI (195 aa)). Positions 19 to 26 (GHVDHGKT) are G1. 19–26 (GHVDHGKT) serves as a coordination point for GTP. A Mg(2+)-binding site is contributed by Thr26. A G2 region spans residues 60–64 (GITIN). Residues 81 to 84 (DCPG) form a G3 region. Residues 81–85 (DCPGH) and 136–139 (NKVD) contribute to the GTP site. The interval 136–139 (NKVD) is G4. A G5 region spans residues 174–176 (SAL).

It belongs to the TRAFAC class translation factor GTPase superfamily. Classic translation factor GTPase family. EF-Tu/EF-1A subfamily. Monomer.

The protein localises to the cytoplasm. It carries out the reaction GTP + H2O = GDP + phosphate + H(+). GTP hydrolase that promotes the GTP-dependent binding of aminoacyl-tRNA to the A-site of ribosomes during protein biosynthesis. The protein is Elongation factor Tu of Karelsulcia muelleri (strain GWSS) (Sulcia muelleri).